The primary structure comprises 312 residues: Ribonuclease Z (312 aa).

Positions 63, 65, 67, 68, 141, 212, and 270 each coordinate Zn(2+). Asp-67 (proton acceptor) is an active-site residue.

The protein belongs to the RNase Z family. Homodimer. It depends on Zn(2+) as a cofactor.

The catalysed reaction is Endonucleolytic cleavage of RNA, removing extra 3' nucleotides from tRNA precursor, generating 3' termini of tRNAs. A 3'-hydroxy group is left at the tRNA terminus and a 5'-phosphoryl group is left at the trailer molecule.. In terms of biological role, zinc phosphodiesterase, which displays some tRNA 3'-processing endonuclease activity. Probably involved in tRNA maturation, by removing a 3'-trailer from precursor tRNA. The polypeptide is Ribonuclease Z (Lactobacillus acidophilus (strain ATCC 700396 / NCK56 / N2 / NCFM)).